The primary structure comprises 360 residues: 45 kDa calcium-binding protein (360 aa).

The N-terminal stretch at 1-29 (MVSKQAFLFSLGSLYLSLLFIFLLMDVYA) is a signal peptide. The N-linked (GlcNAc...) asparagine glycan is linked to Asn33. EF-hand domains lie at 96 to 131 (RNRR…KTEE), 135 to 170 (EAVN…SKGF), 231 to 266 (MLKF…TVEN), 276 to 311 (WVRD…MNEY), and 312 to 347 (NALN…FTGS). Ca(2+)-binding residues include Asp109, Asn111, Asp113, Gln115, Glu120, Asp148, Asp150, Asp152, His154, Glu159, Asp244, Asp246, Asp248, Lys250, Glu255, Asp289, Asn291, Asp293, Glu300, Asp325, Asn327, Asp329, and Glu336.

Belongs to the CREC family.

Its subcellular location is the golgi apparatus lumen. Its function is as follows. May regulate calcium-dependent activities in the endoplasmic reticulum lumen or post-ER compartment. In Xenopus laevis (African clawed frog), this protein is 45 kDa calcium-binding protein (sdf4).